A 241-amino-acid polypeptide reads, in one-letter code: tRNA pseudouridine synthase B (241 aa).

Catalysis depends on aspartate 52, which acts as the Nucleophile.

The protein belongs to the pseudouridine synthase TruB family. Type 1 subfamily.

It catalyses the reaction uridine(55) in tRNA = pseudouridine(55) in tRNA. In terms of biological role, responsible for synthesis of pseudouridine from uracil-55 in the psi GC loop of transfer RNAs. In Chloroherpeton thalassium (strain ATCC 35110 / GB-78), this protein is tRNA pseudouridine synthase B.